We begin with the raw amino-acid sequence, 225 residues long: 2-C-methyl-D-erythritol 4-phosphate cytidylyltransferase (225 aa).

Belongs to the IspD/TarI cytidylyltransferase family. IspD subfamily.

The enzyme catalyses 2-C-methyl-D-erythritol 4-phosphate + CTP + H(+) = 4-CDP-2-C-methyl-D-erythritol + diphosphate. The protein operates within isoprenoid biosynthesis; isopentenyl diphosphate biosynthesis via DXP pathway; isopentenyl diphosphate from 1-deoxy-D-xylulose 5-phosphate: step 2/6. Functionally, catalyzes the formation of 4-diphosphocytidyl-2-C-methyl-D-erythritol from CTP and 2-C-methyl-D-erythritol 4-phosphate (MEP). This is 2-C-methyl-D-erythritol 4-phosphate cytidylyltransferase from Prochlorococcus marinus (strain MIT 9313).